The primary structure comprises 85 residues: Toxin AahP1005 (85 aa).

The first 19 residues, 1 to 19 (MNYLVMISLALLFMTGVES), serve as a signal peptide directing secretion. The LCN-type CS-alpha/beta domain occupies 21 to 83 (KDGYIVDDKN…VSTKKKGGCN (63 aa)). Intrachain disulfides connect Cys31/Cys82, Cys35/Cys55, Cys41/Cys65, and Cys45/Cys67. An Asparagine amide modification is found at Asn83.

The protein belongs to the long (4 C-C) scorpion toxin superfamily. Sodium channel inhibitor family. Alpha subfamily. Expressed by the venom gland.

It localises to the secreted. Functionally, alpha toxins bind voltage-independently at site-3 of sodium channels (Nav) and inhibit the inactivation of the activated channels, thereby blocking neuronal transmission. The protein is Toxin AahP1005 of Androctonus australis (Sahara scorpion).